The following is a 90-amino-acid chain: Sec-independent protein translocase protein TatA (90 aa).

A helical membrane pass occupies residues 1–21; sequence MGGASIWHWIVVGVIVMLLFG. The tract at residues 42–90 is disordered; the sequence is GMADEDQPQAPVANQSPPPVSATEPVRTLPPHQGEPAPAANASVDRKVG.

The protein belongs to the TatA/E family. In terms of assembly, the Tat system comprises two distinct complexes: a TatABC complex, containing multiple copies of TatA, TatB and TatC subunits, and a separate TatA complex, containing only TatA subunits. Substrates initially bind to the TatABC complex, which probably triggers association of the separate TatA complex to form the active translocon.

Its subcellular location is the cell inner membrane. Its function is as follows. Part of the twin-arginine translocation (Tat) system that transports large folded proteins containing a characteristic twin-arginine motif in their signal peptide across membranes. TatA could form the protein-conducting channel of the Tat system. In Methylobacterium nodulans (strain LMG 21967 / CNCM I-2342 / ORS 2060), this protein is Sec-independent protein translocase protein TatA.